The following is a 263-amino-acid chain: Thiazole synthase (263 aa).

K100 acts as the Schiff-base intermediate with DXP in catalysis. 1-deoxy-D-xylulose 5-phosphate-binding positions include G161, 187-188 (AG), and 209-210 (NT).

It belongs to the ThiG family. Homotetramer. Forms heterodimers with either ThiH or ThiS.

It localises to the cytoplasm. It carries out the reaction [ThiS sulfur-carrier protein]-C-terminal-Gly-aminoethanethioate + 2-iminoacetate + 1-deoxy-D-xylulose 5-phosphate = [ThiS sulfur-carrier protein]-C-terminal Gly-Gly + 2-[(2R,5Z)-2-carboxy-4-methylthiazol-5(2H)-ylidene]ethyl phosphate + 2 H2O + H(+). It functions in the pathway cofactor biosynthesis; thiamine diphosphate biosynthesis. Catalyzes the rearrangement of 1-deoxy-D-xylulose 5-phosphate (DXP) to produce the thiazole phosphate moiety of thiamine. Sulfur is provided by the thiocarboxylate moiety of the carrier protein ThiS. In vitro, sulfur can be provided by H(2)S. The protein is Thiazole synthase of Shouchella clausii (strain KSM-K16) (Alkalihalobacillus clausii).